Reading from the N-terminus, the 547-residue chain is Sodium-coupled neutral amino acid transporter 4 (547 aa).

The segment at 1–34 (MDPMELNNVSIEPDGDSCSGDSIQDSYTGMENSD) is disordered. The Extracellular segment spans residues 1–104 (MDPMELNNVS…GLSYAMANTG (104 aa)). Positions 19 to 31 (SGDSIQDSYTGME) are enriched in polar residues. Position 49 is a phosphoserine (Ser49). Residues 105–125 (IILFIIMLLTVAILSLYSVHL) form a helical membrane-spanning segment. Over 126-151 (LLKTAKEGGSLIYEKLGEKAFGWPGK) the chain is Cytoplasmic. The helical transmembrane segment at 152–172 (IGAFISITMQNIGAMSSYLFI) threads the bilayer. The Extracellular portion of the chain corresponds to 173–195 (IKYELPEVIRAFMGLEENTGEWY). Residues 196 to 216 (LNGNYLVLFVSVGIILPLSLL) form a helical membrane-spanning segment. Topologically, residues 217-220 (KNLG) are cytoplasmic. Residues 221–241 (YLGYTSGFSLSCMVFFVSVVI) form a helical membrane-spanning segment. Residues 242 to 332 (YKKFQIPCPL…PKYFVFNSRT (91 aa)) are Extracellular-facing. An intrachain disulfide couples Cys249 to Cys321. 3 N-linked (GlcNAc...) asparagine glycosylation sites follow: Asn260, Asn264, and Asn276. Residues 333–353 (AYAIPILAFAFVCHPEVLPIY) traverse the membrane as a helical segment. At 354 to 369 (SELKDRSRRKMQTVSN) the chain is on the cytoplasmic side. A helical transmembrane segment spans residues 370–390 (ISISGMLVMYLLAALFGYLSF). Over 391–411 (YGDVEDELLHAYSKVYTFDTA) the chain is Extracellular. Residues 412–432 (LLMVRLAVLVAVTLTVPIVLF) form a helical membrane-spanning segment. Topologically, residues 433–453 (PIRTSVITLLFPRKPFSWLKH) are cytoplasmic. A helical membrane pass occupies residues 454 to 474 (FGIAAIIIALNNILVILVPTI). At 475–476 (KY) the chain is on the extracellular side. Residues 477 to 497 (IFGFIGASSATMLIFILPAAF) form a helical membrane-spanning segment. At 498 to 514 (YLKLVKKEPLRSPQKIG) the chain is on the cytoplasmic side. The chain crosses the membrane as a helical span at residues 515 to 535 (ALVFLVTGIIFMMGSMALIIL). Residues 536–547 (DWIYNPPNPNHH) lie on the Extracellular side of the membrane.

It belongs to the amino acid/polyamine transporter 2 family. In terms of processing, the disulfide bond plays an important role in substrate transport, but has no effect on trafficking to the cell surface. Detected in liver, in hepatocytes surrounding the central vein. Not detected in heart, kidney, brain, lung, small intestine, spleen and thymus. Highly expressed in placenta.

Its subcellular location is the cell membrane. The protein resides in the cell projection. It localises to the microvillus membrane. It carries out the reaction L-alanine(in) + Na(+)(in) = L-alanine(out) + Na(+)(out). The enzyme catalyses L-methionine(in) + Na(+)(in) = L-methionine(out) + Na(+)(out). The catalysed reaction is L-asparagine(in) + Na(+)(in) = L-asparagine(out) + Na(+)(out). It catalyses the reaction L-threonine(in) + Na(+)(in) = L-threonine(out) + Na(+)(out). It carries out the reaction L-serine(in) + Na(+)(in) = L-serine(out) + Na(+)(out). The enzyme catalyses glycine(in) + Na(+)(in) = glycine(out) + Na(+)(out). The catalysed reaction is L-glutamine(in) + Na(+)(in) = L-glutamine(out) + Na(+)(out). It catalyses the reaction L-histidine(in) + Na(+)(in) = L-histidine(out) + Na(+)(out). It carries out the reaction L-cysteine(in) + Na(+)(in) = L-cysteine(out) + Na(+)(out). The enzyme catalyses L-proline(in) + Na(+)(in) = L-proline(out) + Na(+)(out). Symporter that cotransports neutral amino acids and sodium ions from the extraccellular to the intracellular side of the cell membrane. The transport is electrogenic, pH dependent and partially tolerates substitution of Na(+) by Li(+). Preferentially transports smaller amino acids, such as glycine, L-alanine, L-serine, L-asparagine and L-threonine, followed by L-cysteine, L-histidine, L-proline and L-glutamine and L-methionine. In Mus musculus (Mouse), this protein is Sodium-coupled neutral amino acid transporter 4.